Consider the following 271-residue polypeptide: Ribosomal RNA small subunit methyltransferase A (271 aa).

The S-adenosyl-L-methionine site is built by N18, L20, G45, E66, D91, and N112.

This sequence belongs to the class I-like SAM-binding methyltransferase superfamily. rRNA adenine N(6)-methyltransferase family. RsmA subfamily.

It is found in the cytoplasm. It catalyses the reaction adenosine(1518)/adenosine(1519) in 16S rRNA + 4 S-adenosyl-L-methionine = N(6)-dimethyladenosine(1518)/N(6)-dimethyladenosine(1519) in 16S rRNA + 4 S-adenosyl-L-homocysteine + 4 H(+). Specifically dimethylates two adjacent adenosines (A1518 and A1519) in the loop of a conserved hairpin near the 3'-end of 16S rRNA in the 30S particle. May play a critical role in biogenesis of 30S subunits. This Vibrio atlanticus (strain LGP32) (Vibrio splendidus (strain Mel32)) protein is Ribosomal RNA small subunit methyltransferase A.